The chain runs to 356 residues: MGLLRIMMPPKLQLLAVVAFAVAMLFLENQIQKLEESRSKLERAIARHEVREIEQRHTMDGPRQDATLDEEEDMVIIYNRVPKTASTSFTNIAYDLCAKNKYHVLHINTTKNNPVMSLQDQVRFVKNITSWKEMKPGFYHGHVSYLDFAKFGVKKKPIYINVIRDPIERLVSYYYFLRFGDDYRPGLRRRKQGDKKTFDECVAEGGSDCAPEKLWLQIPFFCGHSSECWNVGSRWAMDQAKYNLINEYFLVGVTEELEDFIMLLEAALPRFFRGATELYRTGKKSHLRKTTEKKLPTKQTIAKLQQSDIWKMENEFYEFALEQFQFIRAHAVREKDGDLYILAQNFFYEKIYPKSN.

Residues 1 to 11 (MGLLRIMMPPK) are Cytoplasmic-facing. Residues 12–28 (LQLLAVVAFAVAMLFLE) form a helical; Signal-anchor for type II membrane protein membrane-spanning segment. Positions 24-51 (MLFLENQIQKLEESRSKLERAIARHEVR) form a coiled coil. Residues 29–356 (NQIQKLEESR…FYEKIYPKSN (328 aa)) are Lumenal-facing. Positions 83, 84, 85, 86, 87, and 88 each coordinate adenosine 3',5'-bisphosphate. Asn-108 and Asn-127 each carry an N-linked (GlcNAc...) asparagine glycan. Active-site residues include His-140 and His-142. Adenosine 3',5'-bisphosphate-binding residues include Arg-164 and Ser-172. 2 disulfide bridges follow: Cys-201-Cys-209 and Cys-222-Cys-228. Positions 279, 285, 290, and 293 each coordinate adenosine 3',5'-bisphosphate.

The protein belongs to the sulfotransferase 3 family. Homotrimer. Interacts with the C5-epimerase GLCE. Post-translationally, N-glycosylated.

The protein resides in the golgi apparatus membrane. Functionally, catalyzes the transfer of a sulfo group from 3'-phospho-5'-adenylyl sulfate (PAPS) to the 2-OH position of iduronic acid (IdoA) or glucuronic acid (GlcA) within the heparan sulfate (HS) chain and participates in HS biosynthesis. Required for metanephric development of kidney formation, suggesting that 2-O-sulfation within HS is essential for signaling between ureteric bud and metanephric mesenchyme. This chain is Heparan sulfate 2-O-sulfotransferase 1, found in Homo sapiens (Human).